We begin with the raw amino-acid sequence, 127 residues long: UPF0325 protein ASA_3165 (127 aa).

This sequence belongs to the UPF0325 family.

This is UPF0325 protein ASA_3165 from Aeromonas salmonicida (strain A449).